A 904-amino-acid polypeptide reads, in one-letter code: Anoctamin-5 (904 aa).

The Cytoplasmic portion of the chain corresponds to 1-290 (MVEQEGLTAK…HLIRNYFGEK (290 aa)). A helical membrane pass occupies residues 291 to 311 (IGIYFVFLGYYTEMLLFAALV). Topologically, residues 312–371 (GLACFIYGLLSMENNRTSTEICDPDIGGQMIMCPLCDEVCDYWRLNTTCLHSKFSHLFDN) are extracellular. N-linked (GlcNAc...) asparagine glycans are attached at residues Asn326, Asn357, and Asn371. The helical transmembrane segment at 372 to 392 (ESTVFFALFMGIWVTLFLEFW) threads the bilayer. The Cytoplasmic segment spans residues 393–453 (KQRQARLEYE…CHRIPWYFVS (61 aa)). Residues 454 to 474 (GTTVTFGMALLLSSMVSILIY) traverse the membrane as a helical segment. Residues 475-502 (RLSVFATFASFMESEATLQSVKSFFTPQ) lie on the Extracellular side of the membrane. A helical membrane pass occupies residues 503–523 (LATALSGSCLNCIVILILNFF). At 524-548 (YEKISAWITKMEIPRTHQEYESSLT) the chain is on the cytoplasmic side. A helical membrane pass occupies residues 549–569 (LKMFLFQFVNYYSSCFYVAFF). At 570 to 667 (KGKFVGYPGS…RGLFYEYLET (98 aa)) the chain is on the extracellular side. The chain crosses the membrane as a helical span at residues 668–688 (VIQFGFATLFVASFPLAPLFA). Residues 689-723 (LMNNIMGIRVDAWKLTTQYRRPVAAKAHSIGVWQD) lie on the Cytoplasmic side of the membrane. A helical transmembrane segment spans residues 724-744 (ILFGMAIVSVATNAFIVSFTS). Residues 745–825 (DIIPRLVYFY…FWHVLAAKMT (81 aa)) lie on the Extracellular side of the membrane. Residues Asn759, Asn769, and Asn782 are each glycosylated (N-linked (GlcNAc...) asparagine). Residues 826-846 (FIIVMEHVVFLFKFLLAWLIP) form a helical membrane-spanning segment. Residues 847-904 (DVPKDVVEKIKREKLMTIKIIHDFELNKLKENLDVEYGNIMKNVLVDEDNSLKAKTTV) are Cytoplasmic-facing.

This sequence belongs to the anoctamin family. In terms of tissue distribution, highly expressed in skeletal muscle, bone tissues and thyroid gland.

The protein resides in the endoplasmic reticulum membrane. The protein localises to the cell membrane. Plays a role in plasma membrane repair in a process involving annexins. Does not exhibit calcium-activated chloride channel (CaCC) activity. In Mus musculus (Mouse), this protein is Anoctamin-5 (Ano5).